A 115-amino-acid polypeptide reads, in one-letter code: Insulin (115 aa).

An N-terminal signal peptide occupies residues 1–26; the sequence is MALSPFLAAVIPLVLLLSRAPPSADT. 3 cysteine pairs are disulfide-bonded: Cys-33–Cys-101, Cys-45–Cys-114, and Cys-100–Cys-105. Residues 60-92 constitute a propeptide, c peptide; sequence DTGALAAFLPLAYAEDNESQDDESIGINEVLKS.

It belongs to the insulin family. In terms of assembly, heterodimer of a B chain and an A chain linked by two disulfide bonds.

The protein resides in the secreted. Insulin decreases blood glucose concentration. It increases cell permeability to monosaccharides, amino acids and fatty acids. It accelerates glycolysis, the pentose phosphate cycle, and glycogen synthesis in liver. The sequence is that of Insulin (ins) from Myxine glutinosa (Atlantic hagfish).